The primary structure comprises 204 residues: uncharacterized protein (204 aa).

4 consecutive transmembrane segments (helical) span residues 21-50, 92-114, 150-172, and 176-198; these read AWIVFFTIPLVITPLPYVGFLAFFFILLFF, FFTALLYYLFTKFYAVLFFWWWF, LGLRWSFIGLVLLTIAVLLVLSI, and LLASFVVLLLSVVLAHFTAETIL.

The protein localises to the cell membrane. This is an uncharacterized protein from Aquifex aeolicus (strain VF5).